The primary structure comprises 199 residues: Holliday junction resolvase RecU (199 aa).

Mg(2+) is bound by residues Thr82, Asp84, Glu97, and Gln116.

The protein belongs to the RecU family. Requires Mg(2+) as cofactor.

It is found in the cytoplasm. It catalyses the reaction Endonucleolytic cleavage at a junction such as a reciprocal single-stranded crossover between two homologous DNA duplexes (Holliday junction).. Functionally, endonuclease that resolves Holliday junction intermediates in genetic recombination. Cleaves mobile four-strand junctions by introducing symmetrical nicks in paired strands. Promotes annealing of linear ssDNA with homologous dsDNA. Required for DNA repair, homologous recombination and chromosome segregation. This is Holliday junction resolvase RecU from Streptococcus pyogenes serotype M1.